We begin with the raw amino-acid sequence, 347 residues long: Phenylalanine--tRNA ligase alpha subunit (347 aa).

Glu261 serves as a coordination point for Mg(2+).

It belongs to the class-II aminoacyl-tRNA synthetase family. Phe-tRNA synthetase alpha subunit type 1 subfamily. As to quaternary structure, tetramer of two alpha and two beta subunits. Requires Mg(2+) as cofactor.

The protein localises to the cytoplasm. The catalysed reaction is tRNA(Phe) + L-phenylalanine + ATP = L-phenylalanyl-tRNA(Phe) + AMP + diphosphate + H(+). In Streptococcus equi subsp. zooepidemicus (strain MGCS10565), this protein is Phenylalanine--tRNA ligase alpha subunit.